A 450-amino-acid polypeptide reads, in one-letter code: Glucose-6-phosphate isomerase (450 aa).

Catalysis depends on Glu-291, which acts as the Proton donor. Active-site residues include His-312 and Lys-426.

The protein belongs to the GPI family.

The protein localises to the cytoplasm. It catalyses the reaction alpha-D-glucose 6-phosphate = beta-D-fructose 6-phosphate. It participates in carbohydrate biosynthesis; gluconeogenesis. It functions in the pathway carbohydrate degradation; glycolysis; D-glyceraldehyde 3-phosphate and glycerone phosphate from D-glucose: step 2/4. Catalyzes the reversible isomerization of glucose-6-phosphate to fructose-6-phosphate. The polypeptide is Glucose-6-phosphate isomerase (Clostridium botulinum (strain Loch Maree / Type A3)).